An 806-amino-acid polypeptide reads, in one-letter code: Ribonucleoside-diphosphate reductase large subunit-like protein (806 aa).

Belongs to the ribonucleoside diphosphate reductase large chain family.

It is found in the virion. Its subcellular location is the host cytoplasm. In terms of biological role, does not possess a ribonucleotide reductase activity. Betaherpesviruses probably use another strategy to expand the dNTP pool in a quiescent host cell. In Human herpesvirus 7 (strain JI) (HHV-7), this protein is Ribonucleoside-diphosphate reductase large subunit-like protein.